The sequence spans 491 residues: Anthranilate synthase component 1 (491 aa).

Residues S49 and 271-273 (PYL) each bind L-tryptophan. Chorismate is bound at residue 306–307 (GT). A Mg(2+)-binding site is contributed by E333. Chorismate is bound by residues Y421, R441, 455–457 (GAG), and G457. E470 is a binding site for Mg(2+).

Belongs to the anthranilate synthase component I family. In terms of assembly, heterotetramer consisting of two non-identical subunits: a beta subunit (TrpG) and a large alpha subunit (TrpE). Mg(2+) serves as cofactor.

It catalyses the reaction chorismate + L-glutamine = anthranilate + pyruvate + L-glutamate + H(+). The protein operates within amino-acid biosynthesis; L-tryptophan biosynthesis; L-tryptophan from chorismate: step 1/5. Its activity is regulated as follows. Feedback inhibited by tryptophan. Its function is as follows. Part of a heterotetrameric complex that catalyzes the two-step biosynthesis of anthranilate, an intermediate in the biosynthesis of L-tryptophan. In the first step, the glutamine-binding beta subunit (TrpG) of anthranilate synthase (AS) provides the glutamine amidotransferase activity which generates ammonia as a substrate that, along with chorismate, is used in the second step, catalyzed by the large alpha subunit of AS (TrpE) to produce anthranilate. In the absence of TrpG, TrpE can synthesize anthranilate directly from chorismate and high concentrations of ammonia. This Neisseria meningitidis serogroup C / serotype 2a (strain ATCC 700532 / DSM 15464 / FAM18) protein is Anthranilate synthase component 1 (trpE).